The primary structure comprises 113 residues: N(2)-fixation sustaining protein CowN (113 aa).

It belongs to the CowN family.

Its function is as follows. Is required to sustain N(2)-dependent growth in the presence of low levels of carbon monoxide (CO). Probably acts by protecting the N(2) fixation ability of the nitrogenase complex, which is inactivated in the presence of CO. This chain is N(2)-fixation sustaining protein CowN, found in Azoarcus sp. (strain BH72).